Reading from the N-terminus, the 102-residue chain is Small ribosomal subunit protein uS10 (102 aa).

Belongs to the universal ribosomal protein uS10 family. In terms of assembly, part of the 30S ribosomal subunit.

Involved in the binding of tRNA to the ribosomes. The chain is Small ribosomal subunit protein uS10 from Clostridium perfringens (strain ATCC 13124 / DSM 756 / JCM 1290 / NCIMB 6125 / NCTC 8237 / Type A).